The sequence spans 131 residues: Global transcriptional regulator Spx (131 aa).

A disulfide bridge links cysteine 10 with cysteine 13.

It belongs to the ArsC family. Spx subfamily. Interacts with the C-terminal domain of the alpha subunit of the RNAP.

It is found in the cytoplasm. Its function is as follows. Global transcriptional regulator that plays a key role in stress response and exerts either positive or negative regulation of genes. Acts by interacting with the C-terminal domain of the alpha subunit of the RNA polymerase (RNAP). This interaction can enhance binding of RNAP to the promoter region of target genes and stimulate their transcription, or block interaction of RNAP with activator. In Staphylococcus epidermidis (strain ATCC 35984 / DSM 28319 / BCRC 17069 / CCUG 31568 / BM 3577 / RP62A), this protein is Global transcriptional regulator Spx.